We begin with the raw amino-acid sequence, 297 residues long: GTP-binding protein REM 1 (297 aa).

A compositionally biased stretch (polar residues) spans 1 to 10; that stretch reads MTLNTQQEAK. The disordered stretch occupies residues 1–73; the sequence is MTLNTQQEAK…DGWSSESSDS (73 aa). Position 51 is a phosphoserine (Ser-51). Low complexity predominate over residues 64–73; it reads DGWSSESSDS. Residues 87 to 94 and 194 to 197 each bind GTP; these read GDPGVGKT and NKAD. Residues 267–286 form a calmodulin-binding region; sequence ARRFLARLTARSARRRALKA.

It belongs to the small GTPase superfamily. RGK family. As to quaternary structure, in vitro, interacts with calmodulin in a calcium-dependent manner. Interacts 14-3-3 family members including YWHAE, YWHAH, YWHAQ, YWHAZ in a phosphorylation-dependent manner. High expression in cardiac muscle. Moderate expression in lung, skeletal muscle and kidney. Low levels in spleen and brain.

Its function is as follows. Promotes endothelial cell sprouting and actin cytoskeletal reorganization. May be involved in angiogenesis. May function in Ca(2+) signaling. The protein is GTP-binding protein REM 1 (Rem1) of Mus musculus (Mouse).